Consider the following 272-residue polypeptide: Dermonecrotic toxin StSicTox-betaIF1 (272 aa).

Residue His-5 is part of the active site. Residues Glu-25 and Asp-27 each contribute to the Mg(2+) site. His-41 acts as the Nucleophile in catalysis. 2 disulfide bridges follow: Cys-45/Cys-51 and Cys-47/Cys-189. Asp-85 serves as a coordination point for Mg(2+).

This sequence belongs to the arthropod phospholipase D family. Class II subfamily. Mg(2+) is required as a cofactor. As to expression, expressed by the venom gland.

Its subcellular location is the secreted. The enzyme catalyses an N-(acyl)-sphingosylphosphocholine = an N-(acyl)-sphingosyl-1,3-cyclic phosphate + choline. It carries out the reaction an N-(acyl)-sphingosylphosphoethanolamine = an N-(acyl)-sphingosyl-1,3-cyclic phosphate + ethanolamine. The catalysed reaction is a 1-acyl-sn-glycero-3-phosphocholine = a 1-acyl-sn-glycero-2,3-cyclic phosphate + choline. It catalyses the reaction a 1-acyl-sn-glycero-3-phosphoethanolamine = a 1-acyl-sn-glycero-2,3-cyclic phosphate + ethanolamine. Functionally, dermonecrotic toxins cleave the phosphodiester linkage between the phosphate and headgroup of certain phospholipids (sphingolipid and lysolipid substrates), forming an alcohol (often choline) and a cyclic phosphate. This toxin acts on sphingomyelin (SM). It may also act on ceramide phosphoethanolamine (CPE), lysophosphatidylcholine (LPC) and lysophosphatidylethanolamine (LPE), but not on lysophosphatidylserine (LPS), and lysophosphatidylglycerol (LPG). It acts by transphosphatidylation, releasing exclusively cyclic phosphate products as second products. Induces dermonecrosis, hemolysis, increased vascular permeability, edema, inflammatory response, and platelet aggregation. In Sicarius terrosus (Cave spider), this protein is Dermonecrotic toxin StSicTox-betaIF1.